The sequence spans 145 residues: Cell wall synthesis protein CwsA (145 aa).

The chain crosses the membrane as a helical span at residues 104 to 124 (WIFAGIAAAILAGGAVAFSIV).

The protein belongs to the CwsA family.

The protein localises to the cell membrane. Required for regulated cell division, cell wall synthesis and the maintenance of cell shape. This Mycobacterium bovis (strain ATCC BAA-935 / AF2122/97) protein is Cell wall synthesis protein CwsA.